The sequence spans 1759 residues: Zinc finger protein castor homolog 1 (1759 aa).

2 disordered regions span residues 1–26 (MDLGTAEGTRCTDPPAGKPAMAPKRK) and 46–175 (KRAD…SSLR). Composition is skewed to basic and acidic residues over residues 77-88 (PRSEEDKRRAVI) and 137-160 (EEPSKDGGALEEKDSDGAASKEDS). The segment covering 161–171 (GPSTRQASGEA) has biased composition (polar residues). A Glycyl lysine isopeptide (Lys-Gly) (interchain with G-Cter in SUMO2) cross-link involves residue Lys-288. The interval 374 to 420 (SKYDVRGIQKPGPAKVPPTPSLAPAPLASVPSAPSAPGPGPEPPASL) is disordered. A compositionally biased stretch (pro residues) spans 387–396 (AKVPPTPSLA). The span at 397–406 (PAPLASVPSA) shows a compositional bias: low complexity. The span at 407-417 (PSAPGPGPEPP) shows a compositional bias: pro residues. 3 C2H2-type zinc fingers span residues 551 to 575 (YHCMQVGCNKVYTSTSDVMTHENFH), 610 to 634 (FHCRRPGCTFTFKNKCDIEKHKSYH), and 668 to 692 (FHCIRAGCGFTFTSTSQMTSHKRKH). Disordered regions lie at residues 686–723 (TSHKRKHERRHIRSSGALGLPPSLLGAKDTEHEESSND), 736–776 (SSLS…SGLL), 824–843 (VSSGSAASATPDTPTLVASG), and 889–949 (ATFD…AVPA). Residues 687–698 (SHKRKHERRHIR) are compositionally biased toward basic residues. Residues 699 to 712 (SSGALGLPPSLLGA) show a composition bias toward low complexity. Ser-720 and Ser-721 each carry phosphoserine. Over residues 736-764 (SSLSASPTSQQSSASLAAATAATEAGPSA) the composition is skewed to low complexity. Residues 925–939 (ASQDRSLDLTVKEPS) show a composition bias toward basic and acidic residues. Residue Lys-975 forms a Glycyl lysine isopeptide (Lys-Gly) (interchain with G-Cter in SUMO2) linkage. Ser-981 bears the Phosphoserine mark. A C2H2-type 4 zinc finger spans residues 1031 to 1055 (FHCVVEECGALFSTLDGAIKHANFH). Positions 1067-1111 (TEAAFPASAAETKPPMAPSSPPVPPVTTATVSSLEGPAPSPASVP) are disordered. Residues 1081–1091 (PMAPSSPPVPP) are compositionally biased toward pro residues. The C2H2-type 5 zinc finger occupies 1300–1324 (FHCIREGCQFSFLLKHQMTSHARKH). Residues 1367–1392 (ESSTMDRSCSSTPVGNESTAAGNTIS) are disordered. C2H2-type zinc fingers lie at residues 1457–1481 (YHCTRENCGYKFCGRTHMYKHAQHH), 1515–1537 (FHCLRCRFRCTDSTKVTAHRKHH), and 1571–1595 (FHCTFPGCRHTVVGMSQMDSHKRKH). Disordered regions lie at residues 1589–1620 (DSHKRKHEKQERGEPAAEGPAPGPPISLDGSL) and 1643–1736 (LGDA…AGAR). The span at 1655–1673 (AAPGPREGAAAAAAAAGES) shows a compositional bias: low complexity. Residues 1674–1723 (SQEDEEEELELPEEEAEDDEDEDDDEDDDDEDDDEDDDDEDLRTDSEESL) show a composition bias toward acidic residues. Positions 1724–1736 (PEAAAEAAGAGAR) are enriched in low complexity.

Expressed in heart, lung, skeletal muscle, pancreas, testis, small intestine, and stomach, but it is not detectable in the adult brain.

The protein localises to the nucleus. Transcriptional activator. Involved in vascular assembly and morphogenesis through direct transcriptional regulation of EGFL7. This is Zinc finger protein castor homolog 1 (CASZ1) from Homo sapiens (Human).